The following is a 185-amino-acid chain: ATP synthase subunit delta, chloroplastic (185 aa).

Belongs to the ATPase delta chain family. In terms of assembly, F-type ATPases have 2 components, F(1) - the catalytic core - and F(0) - the membrane proton channel. F(1) has five subunits: alpha(3), beta(3), gamma(1), delta(1), epsilon(1). CF(0) has four main subunits: a(1), b(1), b'(1) and c(10-14). The alpha and beta chains form an alternating ring which encloses part of the gamma chain. F(1) is attached to F(0) by a central stalk formed by the gamma and epsilon chains, while a peripheral stalk is formed by the delta, b and b' chains.

Its subcellular location is the plastid. It is found in the chloroplast thylakoid membrane. Its function is as follows. F(1)F(0) ATP synthase produces ATP from ADP in the presence of a proton or sodium gradient. F-type ATPases consist of two structural domains, F(1) containing the extramembraneous catalytic core and F(0) containing the membrane proton channel, linked together by a central stalk and a peripheral stalk. During catalysis, ATP synthesis in the catalytic domain of F(1) is coupled via a rotary mechanism of the central stalk subunits to proton translocation. Functionally, this protein is part of the stalk that links CF(0) to CF(1). It either transmits conformational changes from CF(0) to CF(1) or is implicated in proton conduction. The polypeptide is ATP synthase subunit delta, chloroplastic (Guillardia theta (Cryptophyte)).